The following is a 723-amino-acid chain: Translation initiation factor IF-2 (723 aa).

A disordered region spans residues 112-138 (KIFNNKKNKKQKPQQAPQQEVQKKKEK). A compositionally biased stretch (basic residues) spans 114–123 (FNNKKNKKQK). Residues 224 to 393 (ERPPVVTIMG…LLVSEMEELK (170 aa)) form the tr-type G domain. The G1 stretch occupies residues 233-240 (GHVDHGKT). Position 233–240 (233–240 (GHVDHGKT)) interacts with GTP. The tract at residues 258 to 262 (GITQH) is G2. The tract at residues 279-282 (DTPG) is G3. GTP-binding positions include 279–283 (DTPGH) and 333–336 (NKID). Positions 333–336 (NKID) are G4. Residues 369–371 (SAL) are G5.

This sequence belongs to the TRAFAC class translation factor GTPase superfamily. Classic translation factor GTPase family. IF-2 subfamily.

The protein localises to the cytoplasm. In terms of biological role, one of the essential components for the initiation of protein synthesis. Protects formylmethionyl-tRNA from spontaneous hydrolysis and promotes its binding to the 30S ribosomal subunits. Also involved in the hydrolysis of GTP during the formation of the 70S ribosomal complex. In Anoxybacillus flavithermus (strain DSM 21510 / WK1), this protein is Translation initiation factor IF-2.